Here is a 201-residue protein sequence, read N- to C-terminus: Holliday junction resolvase RecU (201 aa).

The segment at 1 to 26 is disordered; the sequence is MAIGYPNGKKYAASQEELPQQKRKAP. Residues T87, D89, E102, and Q121 each contribute to the Mg(2+) site.

This sequence belongs to the RecU family. Mg(2+) is required as a cofactor.

The protein localises to the cytoplasm. The enzyme catalyses Endonucleolytic cleavage at a junction such as a reciprocal single-stranded crossover between two homologous DNA duplexes (Holliday junction).. Its function is as follows. Endonuclease that resolves Holliday junction intermediates in genetic recombination. Cleaves mobile four-strand junctions by introducing symmetrical nicks in paired strands. Promotes annealing of linear ssDNA with homologous dsDNA. Required for DNA repair, homologous recombination and chromosome segregation. The protein is Holliday junction resolvase RecU of Listeria monocytogenes serotype 4a (strain HCC23).